Here is a 145-residue protein sequence, read N- to C-terminus: D-aminoacyl-tRNA deacylase (145 aa).

The short motif at 137–138 (GP) is the Gly-cisPro motif, important for rejection of L-amino acids element.

Belongs to the DTD family. Homodimer.

It localises to the cytoplasm. The enzyme catalyses glycyl-tRNA(Ala) + H2O = tRNA(Ala) + glycine + H(+). It catalyses the reaction a D-aminoacyl-tRNA + H2O = a tRNA + a D-alpha-amino acid + H(+). Functionally, an aminoacyl-tRNA editing enzyme that deacylates mischarged D-aminoacyl-tRNAs. Also deacylates mischarged glycyl-tRNA(Ala), protecting cells against glycine mischarging by AlaRS. Acts via tRNA-based rather than protein-based catalysis; rejects L-amino acids rather than detecting D-amino acids in the active site. By recycling D-aminoacyl-tRNA to D-amino acids and free tRNA molecules, this enzyme counteracts the toxicity associated with the formation of D-aminoacyl-tRNA entities in vivo and helps enforce protein L-homochirality. In Shewanella putrefaciens (strain CN-32 / ATCC BAA-453), this protein is D-aminoacyl-tRNA deacylase.